A 1349-amino-acid polypeptide reads, in one-letter code: MIIKEYRIPLPMTVEEYRIAQLYMIQKKSRNETYGEGSGVEILENRPYTDGPGGSGQYTHKVYHVGMHIPSWFRSILPKAALRVVEESWNAYPYTRTRFTCPFVEKFSIDIETFYKTDAGENPDVFNLSPVEKNQLTIDFIDIVKDPVPHNEYKTEEDPKLFQSTKTQRGPLSENWIEEYKKQVFPIMCAYKLCKVEFRYWGMQSKIERFIHDTGLRRVMVRAHRQAWCWQDEWYGLSMENIRELEKEAQLMLSRKMAQFNEDGEEATELVKHEAVSDQTSGEPPEPSSSNGEPLVGRGLKKQWSTSSKSSRSSKRGASPSRHSISEWRMQSIARDSDESSDDEFFDAHEDLSDTEEMFPKDITKWSSNDLMDKIESPEPEDTQDGLYRQGAPEFRVASSVEQLNIIEDEVSQPLAAPPSKIHVLLLVLHGGTILDTGAGDPSSKKGDANTIANVFDTVMRVHYPSALGRLAIRLVPCPPVCSDAFALVSNLSPYSHDEGCLSSSQDHIPLAALPLLATSSPQYQEAVATVIQRANLAYGDFIKSQEGMTFNGQVCLIGDCVGGILAFDALCYSNQPVSESQSSSRRGSVVSMQDNDLLSPGILMNAAHCCGGGGGGGGGGGSSGGGGSSGGSSLESSRHLSRSNVDIPRSNGTEDPKRQLPRKRSDSSTYELDTIQQHQAFLSSLHASVLRTEPCSRHSSSSTMLDGTGALGRFDFEITDLFLFGCPLGLVLALRKTVIPALDVFQLRPACQQVYNLFHPADPSASRLEPLLERRFHALPPFSVPRYQRYPLGDGCSTLLADVLQTHNAAFQEHGAPSSPGTAPASRGFRRASEISIASQVSGMAESYTASSIAQKAPDALSHTPSVRRLSLLALPAPSPTTPGPHPPARKASPGLERAPGLPELDIGEVAAKWWGQKRIDYALYCPDALTAFPTVALPHLFHASYWESTDVVSFLLRQVMRHDNSSILELDGKEVSVFTPSKPREKWQRKRTHVKLRNVTANHRINDALANEDGPQVLTGRFMYGPLDMVTLTGEKVDVHIMTQPPSGEWLYLDTLVTNNSGRVSYTIPESHRLGVGVYPIKMVVRGDHTFADSYITVLPKGTEFVVFSIDGSFAASVSIMGSDPKVRAGAVDVVRHWQDLGYLIIYVTGRPDMQKQRVVAWLAQHNFPHGVVSFCDGLVHDPLRHKANFLKLLISELHLRVHAAYGSTKDVAVYSAISLSPMQIYIVGRPTKKLQQQCQFITDGYAAHLAQLKYSHRARPARNTATRMALRKGSFGLPGQGDFLRSRNHLLRTISAQPSGPSHRHERTQSQADGEQRGQRSMSVAAGCWGRAMTGRLEPGAAAGPK.

Residues 262–344 are disordered; sequence EDGEEATELV…RDSDESSDDE (83 aa). Residues 302–322 show a composition bias toward low complexity; sequence KQWSTSSKSSRSSKRGASPSR. A phosphoserine mark is found at S337, S341, S368, and S589. Positions 618–631 are enriched in gly residues; it reads GGGGGSSGGGGSSG. Residues 618–671 form a disordered region; the sequence is GGGGGSSGGGGSSGGSSLESSRHLSRSNVDIPRSNGTEDPKRQLPRKRSDSSTY. Phosphoserine is present on S644. Basic and acidic residues predominate over residues 653–667; it reads GTEDPKRQLPRKRSD. Residues S700, S701, and S702 each carry the phosphoserine modification. Residues 715–963 enclose the DDHD domain; sequence FDFEITDLFL…VSFLLRQVMR (249 aa). R828 carries the omega-N-methylarginine modification. Residues 876–900 form a disordered region; it reads LPAPSPTTPGPHPPARKASPGLERA. The segment covering 878 to 888 has biased composition (pro residues); the sequence is APSPTTPGPHP. A Phosphoserine modification is found at S1277. The segment at 1296 to 1326 is disordered; the sequence is TISAQPSGPSHRHERTQSQADGEQRGQRSMS.

This sequence belongs to the PtdIns transfer protein family. PI transfer class IIA subfamily. As to quaternary structure, interacts with PTK2B via its C-terminus. Interacts with CPNE4 (via VWFA domain). In terms of tissue distribution, highly expressed in brain, heart, ovary, testis and thymus. Detected in small intestine, prostate, pancreas, skeletal muscle, liver, colon and placenta.

The protein localises to the endomembrane system. Its function is as follows. Catalyzes the transfer of phosphatidylinositol and phosphatidylcholine between membranes (in vitro). Binds calcium ions. This is Membrane-associated phosphatidylinositol transfer protein 2 (PITPNM2) from Homo sapiens (Human).